A 339-amino-acid chain; its full sequence is Glycerol-3-phosphate dehydrogenase [NAD(P)+] (339 aa).

4 residues coordinate NADPH: serine 15, tyrosine 16, histidine 36, and lysine 110. Sn-glycerol 3-phosphate contacts are provided by lysine 110, glycine 139, and threonine 141. Alanine 143 is a binding site for NADPH. Sn-glycerol 3-phosphate-binding residues include lysine 195, aspartate 248, serine 258, arginine 259, and asparagine 260. Residue lysine 195 is the Proton acceptor of the active site. Residue arginine 259 participates in NADPH binding. Valine 283 and glutamate 285 together coordinate NADPH.

It belongs to the NAD-dependent glycerol-3-phosphate dehydrogenase family.

It is found in the cytoplasm. The catalysed reaction is sn-glycerol 3-phosphate + NAD(+) = dihydroxyacetone phosphate + NADH + H(+). The enzyme catalyses sn-glycerol 3-phosphate + NADP(+) = dihydroxyacetone phosphate + NADPH + H(+). Its pathway is membrane lipid metabolism; glycerophospholipid metabolism. Catalyzes the reduction of the glycolytic intermediate dihydroxyacetone phosphate (DHAP) to sn-glycerol 3-phosphate (G3P), the key precursor for phospholipid synthesis. The sequence is that of Glycerol-3-phosphate dehydrogenase [NAD(P)+] from Pectobacterium atrosepticum (strain SCRI 1043 / ATCC BAA-672) (Erwinia carotovora subsp. atroseptica).